The following is a 75-amino-acid chain: Tautomerase PptA (75 aa).

The active-site Proton acceptor; via imino nitrogen is Pro2.

The protein belongs to the 4-oxalocrotonate tautomerase family. PptA subfamily. In terms of assembly, homodimer.

Its subcellular location is the cytoplasm. This is Tautomerase PptA from Klebsiella pneumoniae (strain 342).